A 207-amino-acid polypeptide reads, in one-letter code: Venom allergen 5 (207 aa).

Disulfide bonds link C4-C16, C8-C105, and C29-C97. An SCP domain is found at 49-192; sequence DEHNRFRQKV…MKSHYLVCNY (144 aa). Y111 carries the post-translational modification Phosphotyrosine. The N-linked (Glc) (glycation) lysine glycan is linked to K141. A disulfide bridge connects residues C173 and C190.

The protein belongs to the CRISP family. Venom allergen 5-like subfamily. Post-translationally, glycosylated. As to expression, expressed by the venom gland.

Its subcellular location is the secreted. The protein is Venom allergen 5 of Polybia paulista (Neotropical social wasp).